A 550-amino-acid chain; its full sequence is Gamma-aminobutyric acid receptor subunit beta (550 aa).

An N-terminal signal peptide occupies residues 1 to 24; sequence MRRSKTRRIFHVSITLLLVSTIFC. At 25 to 264 the chain is on the extracellular side; that stretch reads QNGTKPHNNS…FQLRRSVGYF (240 aa). Asparagine 26, asparagine 32, asparagine 33, asparagine 45, asparagine 53, and asparagine 193 each carry an N-linked (GlcNAc...) asparagine glycan. The cysteines at positions 180 and 194 are disulfide-linked. A run of 3 helical transmembrane segments spans residues 265-285, 292-311, and 324-344; these read IFQT…SFWI, ARVA…STGV, and IDIY…EYAA. Over 345 to 527 the chain is Cytoplasmic; the sequence is VNYSYWGRER…DVNLIDKYSR (183 aa). The disordered stretch occupies residues 405-465; the sequence is AMSTSNTAAQ…TTSLKGARPH (61 aa). Residues 406-421 show a composition bias toward polar residues; sequence MSTSNTAAQNNNFEST. Residues 528–548 traverse the membrane as a helical segment; it reads VVFPVCFIVFNLFYWSYYMMV.

It belongs to the ligand-gated ion channel (TC 1.A.9) family. Gamma-aminobutyric acid receptor (TC 1.A.9.5) subfamily.

Its subcellular location is the postsynaptic cell membrane. It localises to the cell membrane. In terms of biological role, GABA, an inhibitory neurotransmitter, mediates neuronal inhibition by binding to the GABA receptor and opening an integral chloride channel. This Caenorhabditis elegans protein is Gamma-aminobutyric acid receptor subunit beta (gab-1).